The sequence spans 92 residues: MAKPDIHPTWYPDAKVICNGEVVMTTGSTTPELHVDVWSGNHPFFTGTQKILDTEGRVDRFMRKYGMGSANPDVDAPAPKKAAKKSDAESDS.

Residues 66-92 are disordered; the sequence is GMGSANPDVDAPAPKKAAKKSDAESDS. Positions 70 to 80 are enriched in low complexity; that stretch reads ANPDVDAPAPK.

It belongs to the bacterial ribosomal protein bL31 family. Type A subfamily. Part of the 50S ribosomal subunit.

Functionally, binds the 23S rRNA. The protein is Large ribosomal subunit protein bL31 of Synechococcus sp. (strain RCC307).